A 467-amino-acid polypeptide reads, in one-letter code: Asparagine--tRNA ligase (467 aa).

It belongs to the class-II aminoacyl-tRNA synthetase family. In terms of assembly, homodimer.

The protein localises to the cytoplasm. The catalysed reaction is tRNA(Asn) + L-asparagine + ATP = L-asparaginyl-tRNA(Asn) + AMP + diphosphate + H(+). This is Asparagine--tRNA ligase from Pasteurella multocida (strain Pm70).